Reading from the N-terminus, the 329-residue chain is Segregation and condensation protein B (329 aa).

Disordered stretches follow at residues 1–39 (MTTG…GPAD), 252–274 (IVEK…SDPA), and 286–329 (SEAA…PKPE).

This sequence belongs to the ScpB family. As to quaternary structure, homodimer. Homodimerization may be required to stabilize the binding of ScpA to the Smc head domains. Component of the Structural Maintenance of Chromosome (SMC) condensin-like complex composed of ScpA, ScpB and the Smc homodimer. ScpA and ScpB bind to the head domain of Smc, the presence of the three proteins is required for the association of the complex with DNA.

Its subcellular location is the cytoplasm. In terms of biological role, a conditionally essential component of the chromosome segregation machinery. Required for chromosome condensation and partitioning. Important for positioning and anchoring of ParB-parS complexes (ori of replication) in the subpolar region, and of the ter replication site, as well as for segration of the ParB-parS complex and thus chromosome segregation. Probably acts via the formation of a condensin-like complex containing Smc, ScpA and ScpB that pulls DNA away from mid-cell into both cell halves. This chain is Segregation and condensation protein B, found in Myxococcus xanthus (strain DK1622).